Consider the following 297-residue polypeptide: L-ribulose 3-epimerase (297 aa).

Glu147 functions as the Proton donor/acceptor in the catalytic mechanism. Mn(2+) is bound at residue Glu147. Residues Glu153 and 180 to 183 each bind substrate; that span reads DTFH. Residues Asp180 and His206 each coordinate Mn(2+). Arg212 is a binding site for substrate. Glu241 functions as the Proton donor/acceptor in the catalytic mechanism. Glu241 serves as a coordination point for Mn(2+).

Belongs to the hyi family. Homotetramer. Mn(2+) is required as a cofactor.

It carries out the reaction L-ribulose = L-xylulose. The enzyme catalyses keto-D-tagatose = keto-D-sorbose. The catalysed reaction is D-allulose = keto-D-fructose. With respect to regulation, strongly inhibited by Co(2+) and Ni(2+), and slightly inhibited by EDTA. Catalyzes the epimerization of various ketoses at the C(3) position. It is able to interconvert L-ribulose with high efficiency. The enzyme can also accept other ketopentoses such as D-psicose and D-tagatose with lower efficiency. This chain is L-ribulose 3-epimerase, found in Mesorhizobium japonicum (strain LMG 29417 / CECT 9101 / MAFF 303099) (Mesorhizobium loti (strain MAFF 303099)).